A 447-amino-acid polypeptide reads, in one-letter code: Probable ribonuclease FAU-1 (447 aa).

The interval 424–447 (PEAPGGKICTPEGLTSAPPRSSSA) is disordered.

This sequence belongs to the FAU-1 family.

In terms of biological role, probable RNase involved in rRNA stability through maturation and/or degradation of precursor rRNAs. Binds to RNA in loop regions with AU-rich sequences. This chain is Probable ribonuclease FAU-1, found in Pyrobaculum neutrophilum (strain DSM 2338 / JCM 9278 / NBRC 100436 / V24Sta) (Thermoproteus neutrophilus).